A 256-amino-acid chain; its full sequence is Thiazole synthase (256 aa).

The active-site Schiff-base intermediate with DXP is the lysine 95. Residues glycine 156, 182–183 (AG), and 204–205 (NT) each bind 1-deoxy-D-xylulose 5-phosphate.

Belongs to the ThiG family. As to quaternary structure, homotetramer. Forms heterodimers with either ThiH or ThiS.

The protein resides in the cytoplasm. The catalysed reaction is [ThiS sulfur-carrier protein]-C-terminal-Gly-aminoethanethioate + 2-iminoacetate + 1-deoxy-D-xylulose 5-phosphate = [ThiS sulfur-carrier protein]-C-terminal Gly-Gly + 2-[(2R,5Z)-2-carboxy-4-methylthiazol-5(2H)-ylidene]ethyl phosphate + 2 H2O + H(+). The protein operates within cofactor biosynthesis; thiamine diphosphate biosynthesis. Functionally, catalyzes the rearrangement of 1-deoxy-D-xylulose 5-phosphate (DXP) to produce the thiazole phosphate moiety of thiamine. Sulfur is provided by the thiocarboxylate moiety of the carrier protein ThiS. In vitro, sulfur can be provided by H(2)S. This Escherichia coli O81 (strain ED1a) protein is Thiazole synthase.